Reading from the N-terminus, the 157-residue chain is Catabolic 3-dehydroquinase (157 aa).

Tyr-27 functions as the Proton acceptor in the catalytic mechanism. Asn-80, His-86, and Asp-93 together coordinate substrate. Catalysis depends on His-106, which acts as the Proton donor. Residues 107-108 (VS) and Arg-117 each bind substrate.

This sequence belongs to the type-II 3-dehydroquinase family. Homododecamer. Adopts a ring-like structure, composed of an arrangement of two hexameric rings stacked on top of one another.

It catalyses the reaction 3-dehydroquinate = 3-dehydroshikimate + H2O. Its pathway is aromatic compound metabolism; 3,4-dihydroxybenzoate biosynthesis; 3,4-dihydroxybenzoate from 3-dehydroquinate: step 1/2. Is involved in the catabolism of quinate. Allows the utilization of quinate as carbon source via the beta-ketoadipate pathway. In Pyricularia oryzae (strain 70-15 / ATCC MYA-4617 / FGSC 8958) (Rice blast fungus), this protein is Catabolic 3-dehydroquinase.